The primary structure comprises 311 residues: MKVAVLGAAGGIGQALALLLKNRLPAGSELSLYDIAPVTPGVAVDLSHIPTDVKVKGFCGEDPSPALVGADVVLISAGVARKPGMDRSDLFNINPGIVKNLVEKCAASCPKALIGIITNPVNTTVAIAAEVLKKAGVYDKRRLFGVTTLDVIRAETFVADAKGLNVDKVRVNVIGGHSGVTILPLLSQIEGASFSAEEVAAMTKRIQNAGTEVVEAKAGGGSATLSMGQAACRFGLSLIKGLQGEANVIECAYVEGDGKHATFFAQPILLGKNGVETVLDYGKLSAFEQEAMEGMLATLKADIQLGVEFVK.

NAD(+)-binding positions include 7–13 (GAAGGIG) and Asp34. The substrate site is built by Arg81 and Arg87. NAD(+)-binding positions include Asn94 and 117 to 119 (ITN). Substrate-binding residues include Asn119 and Arg153. His177 acts as the Proton acceptor in catalysis. Met227 is a binding site for NAD(+).

Belongs to the LDH/MDH superfamily. MDH type 1 family. Homodimer.

It carries out the reaction (S)-malate + NAD(+) = oxaloacetate + NADH + H(+). Functionally, catalyzes the reversible oxidation of malate to oxaloacetate. This is Malate dehydrogenase from Aeromonas salmonicida (strain A449).